We begin with the raw amino-acid sequence, 423 residues long: Riboflavin biosynthesis protein RibBA (423 aa).

The interval 1–204 (MTRLDSVERA…IADLIEWRRK (204 aa)) is DHBP synthase. D-ribulose 5-phosphate contacts are provided by residues 28-29 (RE), Asp33, 141-145 (RPGHT), and Glu165. Glu29 provides a ligand contact to Mg(2+). Mg(2+) is bound at residue His144. Residues 205 to 423 (HEKHIARVAE…AVPGEFGGAV (219 aa)) are GTP cyclohydrolase II. Residue 259–263 (RVHSE) participates in GTP binding. 3 residues coordinate Zn(2+): Cys264, Cys275, and Cys277. Residues Gln280, 303–305 (EGR), and Thr325 each bind GTP. The active-site Proton acceptor; for GTP cyclohydrolase activity is the Asp337. Arg339 serves as the catalytic Nucleophile; for GTP cyclohydrolase activity. Positions 360 and 365 each coordinate GTP.

It in the N-terminal section; belongs to the DHBP synthase family. This sequence in the C-terminal section; belongs to the GTP cyclohydrolase II family. It depends on Mg(2+) as a cofactor. Mn(2+) serves as cofactor. Requires Zn(2+) as cofactor.

The enzyme catalyses D-ribulose 5-phosphate = (2S)-2-hydroxy-3-oxobutyl phosphate + formate + H(+). It catalyses the reaction GTP + 4 H2O = 2,5-diamino-6-hydroxy-4-(5-phosphoribosylamino)-pyrimidine + formate + 2 phosphate + 3 H(+). The protein operates within cofactor biosynthesis; riboflavin biosynthesis; 2-hydroxy-3-oxobutyl phosphate from D-ribulose 5-phosphate: step 1/1. It functions in the pathway cofactor biosynthesis; riboflavin biosynthesis; 5-amino-6-(D-ribitylamino)uracil from GTP: step 1/4. Functionally, catalyzes the conversion of D-ribulose 5-phosphate to formate and 3,4-dihydroxy-2-butanone 4-phosphate. Catalyzes the conversion of GTP to 2,5-diamino-6-ribosylamino-4(3H)-pyrimidinone 5'-phosphate (DARP), formate and pyrophosphate. The protein is Riboflavin biosynthesis protein RibBA of Mycolicibacterium gilvum (strain PYR-GCK) (Mycobacterium gilvum (strain PYR-GCK)).